Here is a 638-residue protein sequence, read N- to C-terminus: Pentatricopeptide repeat-containing protein At3g49730 (638 aa).

PPR repeat units lie at residues 130–164, 166–200, 201–231, 235–269, 270–304, 305–340, 341–375, 376–410, 411–445, 446–480, 483–513, and 520–554; these read SYEV…NPEL, EPEL…GLEP, DEYV…MREK, NLRY…GLEP, DIVV…GFEP, NVNC…GCEA, DIVT…GVMP, SQVT…GCHP, DLLI…GLSP, GVDT…GIFS, QYGT…ISNK, and NVSA…DLMP. Positions 604 to 638 are disordered; the sequence is LIEKAKPKGNKEGKKKGTDHQRYKGRGERSRAKAL.

This sequence belongs to the PPR family. P subfamily.

This is Pentatricopeptide repeat-containing protein At3g49730 from Arabidopsis thaliana (Mouse-ear cress).